A 364-amino-acid polypeptide reads, in one-letter code: tRNA 2-selenouridine synthase (364 aa).

The 124-residue stretch at 14 to 137 folds into the Rhodanese domain; it reads LIADTPIIDV…LRQTAIQATI (124 aa). Cysteine 97 functions as the S-selanylcysteine intermediate in the catalytic mechanism.

The protein belongs to the SelU family. Monomer.

It catalyses the reaction 5-methylaminomethyl-2-thiouridine(34) in tRNA + selenophosphate + (2E)-geranyl diphosphate + H2O + H(+) = 5-methylaminomethyl-2-selenouridine(34) in tRNA + (2E)-thiogeraniol + phosphate + diphosphate. The enzyme catalyses 5-methylaminomethyl-2-thiouridine(34) in tRNA + (2E)-geranyl diphosphate = 5-methylaminomethyl-S-(2E)-geranyl-thiouridine(34) in tRNA + diphosphate. The catalysed reaction is 5-methylaminomethyl-S-(2E)-geranyl-thiouridine(34) in tRNA + selenophosphate + H(+) = 5-methylaminomethyl-2-(Se-phospho)selenouridine(34) in tRNA + (2E)-thiogeraniol. It carries out the reaction 5-methylaminomethyl-2-(Se-phospho)selenouridine(34) in tRNA + H2O = 5-methylaminomethyl-2-selenouridine(34) in tRNA + phosphate. Involved in the post-transcriptional modification of the uridine at the wobble position (U34) of tRNA(Lys), tRNA(Glu) and tRNA(Gln). Catalyzes the conversion of 2-thiouridine (S2U-RNA) to 2-selenouridine (Se2U-RNA). Acts in a two-step process involving geranylation of 2-thiouridine (S2U) to S-geranyl-2-thiouridine (geS2U) and subsequent selenation of the latter derivative to 2-selenouridine (Se2U) in the tRNA chain. In Escherichia fergusonii (strain ATCC 35469 / DSM 13698 / CCUG 18766 / IAM 14443 / JCM 21226 / LMG 7866 / NBRC 102419 / NCTC 12128 / CDC 0568-73), this protein is tRNA 2-selenouridine synthase.